Reading from the N-terminus, the 327-residue chain is NADPH-dependent aldose reductase GRE3 (327 aa).

The Proton donor role is filled by tyrosine 49. Histidine 111 lines the substrate pocket. Residue 219-286 coordinates NADP(+); sequence SSFGPQSFIE…SSKKERLLGN (68 aa).

The protein belongs to the aldo/keto reductase family. In terms of assembly, monomer.

Its subcellular location is the cytoplasm. It localises to the nucleus. The enzyme catalyses an alditol + NAD(+) = an aldose + NADH + H(+). The catalysed reaction is an alditol + NADP(+) = an aldose + NADPH + H(+). Functionally, aldose reductase with a broad substrate specificity. Reduces the cytotoxic compound methylglyoxal (MG) to acetol and (R)-lactaldehyde under stress conditions. MG is synthesized via a bypath of glycolysis from dihydroxyacetone phosphate and is believed to play a role in cell cycle regulation and stress adaptation. In pentose-fermenting yeasts, aldose reductase catalyzes the reduction of xylose into xylitol. The purified enzyme catalyzes this reaction, but the inability of S.cerevisiae to grow on xylose as sole carbon source indicates that the physiological function is more likely methylglyoxal reduction. This chain is NADPH-dependent aldose reductase GRE3, found in Saccharomyces cerevisiae (strain ATCC 204508 / S288c) (Baker's yeast).